The following is a 252-amino-acid chain: 5'-nucleotidase SurE (252 aa).

Residues D8, D9, S39, and N91 each contribute to the a divalent metal cation site.

This sequence belongs to the SurE nucleotidase family. The cofactor is a divalent metal cation.

The protein resides in the cytoplasm. It catalyses the reaction a ribonucleoside 5'-phosphate + H2O = a ribonucleoside + phosphate. In terms of biological role, nucleotidase that shows phosphatase activity on nucleoside 5'-monophosphates. The chain is 5'-nucleotidase SurE from Gemmatimonas aurantiaca (strain DSM 14586 / JCM 11422 / NBRC 100505 / T-27).